We begin with the raw amino-acid sequence, 645 residues long: DNA mismatch repair protein MutL (645 aa).

It belongs to the DNA mismatch repair MutL/HexB family.

In terms of biological role, this protein is involved in the repair of mismatches in DNA. It is required for dam-dependent methyl-directed DNA mismatch repair. May act as a 'molecular matchmaker', a protein that promotes the formation of a stable complex between two or more DNA-binding proteins in an ATP-dependent manner without itself being part of a final effector complex. In Geobacillus thermodenitrificans (strain NG80-2), this protein is DNA mismatch repair protein MutL.